We begin with the raw amino-acid sequence, 256 residues long: Trans-aconitate 2-methyltransferase (256 aa).

Belongs to the methyltransferase superfamily. Tam family.

It is found in the cytoplasm. It carries out the reaction trans-aconitate + S-adenosyl-L-methionine = (E)-3-(methoxycarbonyl)pent-2-enedioate + S-adenosyl-L-homocysteine. Functionally, catalyzes the S-adenosylmethionine monomethyl esterification of trans-aconitate. The protein is Trans-aconitate 2-methyltransferase of Agrobacterium fabrum (strain C58 / ATCC 33970) (Agrobacterium tumefaciens (strain C58)).